Consider the following 415-residue polypeptide: Zona pellucida-like domain-containing protein 1 (415 aa).

The N-terminal stretch at 1–19 is a signal peptide; that stretch reads MERVWLLFLLAIRVSPGSA. Residues 20–373 are Extracellular-facing; that stretch reads QFNSYNCDAN…PFQLNAVTSS (354 aa). One can recognise a ZP domain in the interval 43-320; sequence YCGVQAITMK…PICGNRKRRD (278 aa). Intrachain disulfides connect C44/C155 and C79/C104. N164 carries N-linked (GlcNAc...) asparagine glycosylation. 2 disulfide bridges follow: C235–C296 and C255–C313. The helical transmembrane segment at 374–394 threads the bilayer; the sequence is LISGMVILGVLCFSLLLCSLA. Residues 395–415 lie on the Cytoplasmic side of the membrane; sequence LLHRKGSTSLVLNGVRNPVFE.

Post-translationally, proteolytically cleaved before the transmembrane segment to yield the secreted form found in the extracellular matrix of the cupula.

The protein resides in the cytoplasmic vesicle membrane. It localises to the secreted. It is found in the extracellular space. The protein localises to the extracellular matrix. In terms of biological role, glycoprotein which is a component of the gelatinous extracellular matrix in the cupulae of the vestibular organ. In Mus musculus (Mouse), this protein is Zona pellucida-like domain-containing protein 1 (Zpld1).